A 173-amino-acid chain; its full sequence is Shikimate kinase 1 (173 aa).

Position 14–19 (14–19 (GAGKST)) interacts with ATP. Residue Ser18 participates in Mg(2+) binding. Substrate-binding residues include Asp36, Arg60, and Gly82. Position 120 (Arg120) interacts with ATP. Residue Arg140 participates in substrate binding. An ATP-binding site is contributed by Gln157.

It belongs to the shikimate kinase family. In terms of assembly, monomer. Mg(2+) serves as cofactor.

Its subcellular location is the cytoplasm. The catalysed reaction is shikimate + ATP = 3-phosphoshikimate + ADP + H(+). It participates in metabolic intermediate biosynthesis; chorismate biosynthesis; chorismate from D-erythrose 4-phosphate and phosphoenolpyruvate: step 5/7. Catalyzes the specific phosphorylation of the 3-hydroxyl group of shikimic acid using ATP as a cosubstrate. This chain is Shikimate kinase 1, found in Citrobacter koseri (strain ATCC BAA-895 / CDC 4225-83 / SGSC4696).